We begin with the raw amino-acid sequence, 408 residues long: Broad specificity amino-acid racemase (408 aa).

The first 24 residues, 1 to 24 (MNFKKTLLSIAIASASLTPAFSYS), serve as a signal peptide directing secretion. Residues cysteine 71 and cysteine 97 are joined by a disulfide bond. Catalysis depends on lysine 75, which acts as the Proton acceptor. Residue lysine 75 is modified to N6-(pyridoxal phosphate)lysine. Arginine 174 lines the substrate pocket. The active-site Proton acceptor is the tyrosine 300. Residue methionine 348 coordinates substrate.

It belongs to the alanine racemase family. Bsr subfamily. Requires pyridoxal 5'-phosphate as cofactor.

It localises to the periplasm. It catalyses the reaction an L-alpha-amino acid = a D-alpha-amino acid. The enzyme catalyses L-lysine = D-lysine. The catalysed reaction is L-arginine = D-arginine. Functionally, amino-acid racemase able to utilize a broad range of substrates. The polypeptide is Broad specificity amino-acid racemase (alr) (Vibrio vulnificus (strain CMCP6)).